We begin with the raw amino-acid sequence, 176 residues long: Ribosome maturation factor RimM (176 aa).

One can recognise a PRC barrel domain in the interval 97–176; the sequence is EDEFYWRDLI…QILVDWDPDF (80 aa).

Belongs to the RimM family. In terms of assembly, binds ribosomal protein uS19.

The protein resides in the cytoplasm. In terms of biological role, an accessory protein needed during the final step in the assembly of 30S ribosomal subunit, possibly for assembly of the head region. Essential for efficient processing of 16S rRNA. May be needed both before and after RbfA during the maturation of 16S rRNA. It has affinity for free ribosomal 30S subunits but not for 70S ribosomes. The chain is Ribosome maturation factor RimM from Shewanella halifaxensis (strain HAW-EB4).